We begin with the raw amino-acid sequence, 154 residues long: SsrA-binding protein (154 aa).

It belongs to the SmpB family.

It localises to the cytoplasm. In terms of biological role, required for rescue of stalled ribosomes mediated by trans-translation. Binds to transfer-messenger RNA (tmRNA), required for stable association of tmRNA with ribosomes. tmRNA and SmpB together mimic tRNA shape, replacing the anticodon stem-loop with SmpB. tmRNA is encoded by the ssrA gene; the 2 termini fold to resemble tRNA(Ala) and it encodes a 'tag peptide', a short internal open reading frame. During trans-translation Ala-aminoacylated tmRNA acts like a tRNA, entering the A-site of stalled ribosomes, displacing the stalled mRNA. The ribosome then switches to translate the ORF on the tmRNA; the nascent peptide is terminated with the 'tag peptide' encoded by the tmRNA and targeted for degradation. The ribosome is freed to recommence translation, which seems to be the essential function of trans-translation. This is SsrA-binding protein from Treponema denticola (strain ATCC 35405 / DSM 14222 / CIP 103919 / JCM 8153 / KCTC 15104).